A 431-amino-acid polypeptide reads, in one-letter code: Adenylosuccinate synthetase (431 aa).

GTP is bound by residues 13–19 (GDEGKGK) and 41–43 (GHT). The active-site Proton acceptor is the D14. Mg(2+) is bound by residues D14 and G41. Residues 14 to 17 (DEGK), 39 to 42 (NAGH), T130, R144, Q225, T240, and R304 contribute to the IMP site. Catalysis depends on H42, which acts as the Proton donor. 300–306 (ATTGRKR) lines the substrate pocket. GTP contacts are provided by residues R306, 332–334 (KLD), and 415–417 (STG).

It belongs to the adenylosuccinate synthetase family. As to quaternary structure, homodimer. The cofactor is Mg(2+).

It localises to the cytoplasm. The enzyme catalyses IMP + L-aspartate + GTP = N(6)-(1,2-dicarboxyethyl)-AMP + GDP + phosphate + 2 H(+). Its pathway is purine metabolism; AMP biosynthesis via de novo pathway; AMP from IMP: step 1/2. Its function is as follows. Plays an important role in the de novo pathway of purine nucleotide biosynthesis. Catalyzes the first committed step in the biosynthesis of AMP from IMP. This chain is Adenylosuccinate synthetase, found in Shewanella woodyi (strain ATCC 51908 / MS32).